Consider the following 345-residue polypeptide: Anthranilate phosphoribosyltransferase (345 aa).

Residues Gly-84, 87–88 (GD), Thr-92, 94–97 (NIST), 112–120 (KHGGRGVSS), and Ser-124 each bind 5-phospho-alpha-D-ribose 1-diphosphate. Gly-84 contributes to the anthranilate binding site. Ser-96 contributes to the Mg(2+) binding site. Arg-170 lines the anthranilate pocket. 2 residues coordinate Mg(2+): Asp-229 and Glu-230.

The protein belongs to the anthranilate phosphoribosyltransferase family. In terms of assembly, homodimer. Requires Mg(2+) as cofactor.

The enzyme catalyses N-(5-phospho-beta-D-ribosyl)anthranilate + diphosphate = 5-phospho-alpha-D-ribose 1-diphosphate + anthranilate. The protein operates within amino-acid biosynthesis; L-tryptophan biosynthesis; L-tryptophan from chorismate: step 2/5. Functionally, catalyzes the transfer of the phosphoribosyl group of 5-phosphorylribose-1-pyrophosphate (PRPP) to anthranilate to yield N-(5'-phosphoribosyl)-anthranilate (PRA). The sequence is that of Anthranilate phosphoribosyltransferase from Paracidovorax citrulli (strain AAC00-1) (Acidovorax citrulli).